Here is an 87-residue protein sequence, read N- to C-terminus: Small ribosomal subunit protein bS20 (87 aa).

A disordered region spans residues 1–22 (MANSPQAKKRARQNEKRFAINK).

Belongs to the bacterial ribosomal protein bS20 family.

Binds directly to 16S ribosomal RNA. The sequence is that of Small ribosomal subunit protein bS20 from Ruegeria sp. (strain TM1040) (Silicibacter sp.).